Here is a 76-residue protein sequence, read N- to C-terminus: uncharacterized protein (76 aa).

This is an uncharacterized protein from Escherichia coli O157:H7.